Here is a 305-residue protein sequence, read N- to C-terminus: UDP-3-O-acyl-N-acetylglucosamine deacetylase (305 aa).

Histidine 79, histidine 238, and aspartate 242 together coordinate Zn(2+). Residue histidine 265 is the Proton donor of the active site.

Belongs to the LpxC family. Zn(2+) is required as a cofactor.

The catalysed reaction is a UDP-3-O-[(3R)-3-hydroxyacyl]-N-acetyl-alpha-D-glucosamine + H2O = a UDP-3-O-[(3R)-3-hydroxyacyl]-alpha-D-glucosamine + acetate. Its pathway is glycolipid biosynthesis; lipid IV(A) biosynthesis; lipid IV(A) from (3R)-3-hydroxytetradecanoyl-[acyl-carrier-protein] and UDP-N-acetyl-alpha-D-glucosamine: step 2/6. In terms of biological role, catalyzes the hydrolysis of UDP-3-O-myristoyl-N-acetylglucosamine to form UDP-3-O-myristoylglucosamine and acetate, the committed step in lipid A biosynthesis. In Klebsiella pneumoniae subsp. pneumoniae (strain ATCC 700721 / MGH 78578), this protein is UDP-3-O-acyl-N-acetylglucosamine deacetylase.